Consider the following 396-residue polypeptide: MEKQRSKKTKISDDLITCSGNSVQIPFDLIPEILKRLPVKTLARFLSVSKEYTSIIRNRDFMKSYLINSSTRPQSLIFTIAGGGIHCFFSLIDQGESTSSSKPTYLMNCPHLQLKTFAPSVHGLICHGPPSTLIVSSPRLIVSNPSTRRSIILPKIDANHECIYHHMGYDPIDGDYKVLCMMKGMHVYQRRYLAKELQVFTLRKGNSWRMVEDFPPHCLCHEDTPDLCINGVLYYVAMLDTASNHAVMSFDVRSEKFDLIKGGPDGDLNPKLTRYEGKPALLFPGSDYRINLWVIEDAAKHEWSKMSYDVSSTSLIRNPYFHHCVFCTNDAGEIVLAPDFVRTKTFVVLYYHPKKNTMRSVVIKGIRDRKIPLWDEASYHRIISVFSGQVDNLMFL.

Positions Ser-19–Tyr-65 constitute an F-box domain.

This is F-box protein At2g21930 from Arabidopsis thaliana (Mouse-ear cress).